The following is a 348-amino-acid chain: Beta-hexosaminidase (348 aa).

Substrate is bound by residues aspartate 62, arginine 70, arginine 134, and 164–165 (KH). Histidine 177 functions as the Proton donor/acceptor in the catalytic mechanism. Catalysis depends on aspartate 249, which acts as the Nucleophile.

This sequence belongs to the glycosyl hydrolase 3 family. NagZ subfamily.

Its subcellular location is the cytoplasm. The catalysed reaction is Hydrolysis of terminal non-reducing N-acetyl-D-hexosamine residues in N-acetyl-beta-D-hexosaminides.. The protein operates within cell wall biogenesis; peptidoglycan recycling. Plays a role in peptidoglycan recycling by cleaving the terminal beta-1,4-linked N-acetylglucosamine (GlcNAc) from peptide-linked peptidoglycan fragments, giving rise to free GlcNAc, anhydro-N-acetylmuramic acid and anhydro-N-acetylmuramic acid-linked peptides. The sequence is that of Beta-hexosaminidase from Histophilus somni (strain 2336) (Haemophilus somnus).